A 111-amino-acid polypeptide reads, in one-letter code: ATP-dependent Clp protease adapter protein ClpS (111 aa).

It belongs to the ClpS family. Binds to the N-terminal domain of the chaperone ClpA.

Functionally, involved in the modulation of the specificity of the ClpAP-mediated ATP-dependent protein degradation. This is ATP-dependent Clp protease adapter protein ClpS from Legionella pneumophila (strain Paris).